The primary structure comprises 705 residues: Phosphoribosylformylglycinamidine synthase subunit PurL (705 aa).

H32 is an active-site residue. Y35 serves as a coordination point for ATP. Position 76 (E76) interacts with Mg(2+). Substrate-binding positions include 77–80 (SHNH) and R99. The active-site Proton acceptor is H78. A Mg(2+)-binding site is contributed by D100. Q224 is a substrate binding site. D252 is a binding site for Mg(2+). Position 296-298 (296-298 (ESQ)) interacts with substrate. 2 residues coordinate ATP: D471 and G508. Residue N509 coordinates Mg(2+). S511 is a binding site for substrate.

This sequence belongs to the FGAMS family. In terms of assembly, monomer. Part of the FGAM synthase complex composed of 1 PurL, 1 PurQ and 2 PurS subunits.

Its subcellular location is the cytoplasm. The catalysed reaction is N(2)-formyl-N(1)-(5-phospho-beta-D-ribosyl)glycinamide + L-glutamine + ATP + H2O = 2-formamido-N(1)-(5-O-phospho-beta-D-ribosyl)acetamidine + L-glutamate + ADP + phosphate + H(+). The protein operates within purine metabolism; IMP biosynthesis via de novo pathway; 5-amino-1-(5-phospho-D-ribosyl)imidazole from N(2)-formyl-N(1)-(5-phospho-D-ribosyl)glycinamide: step 1/2. Part of the phosphoribosylformylglycinamidine synthase complex involved in the purines biosynthetic pathway. Catalyzes the ATP-dependent conversion of formylglycinamide ribonucleotide (FGAR) and glutamine to yield formylglycinamidine ribonucleotide (FGAM) and glutamate. The FGAM synthase complex is composed of three subunits. PurQ produces an ammonia molecule by converting glutamine to glutamate. PurL transfers the ammonia molecule to FGAR to form FGAM in an ATP-dependent manner. PurS interacts with PurQ and PurL and is thought to assist in the transfer of the ammonia molecule from PurQ to PurL. In Pyrococcus horikoshii (strain ATCC 700860 / DSM 12428 / JCM 9974 / NBRC 100139 / OT-3), this protein is Phosphoribosylformylglycinamidine synthase subunit PurL.